The primary structure comprises 120 residues: Large ribosomal subunit protein uL18 (120 aa).

Belongs to the universal ribosomal protein uL18 family. Part of the 50S ribosomal subunit; part of the 5S rRNA/L5/L18/L25 subcomplex. Contacts the 5S and 23S rRNAs.

This is one of the proteins that bind and probably mediate the attachment of the 5S RNA into the large ribosomal subunit, where it forms part of the central protuberance. The sequence is that of Large ribosomal subunit protein uL18 from Bradyrhizobium sp. (strain ORS 278).